The following is a 385-amino-acid chain: 26S proteasome non-ATPase regulatory subunit 13 (385 aa).

Residues 176-347 (EFYKNALMYL…EIIHITWVTP (172 aa)) form the PCI domain.

Belongs to the proteasome subunit S11 family.

Acts as a regulatory subunit of the 26S proteasome which is involved in the ATP-dependent degradation of ubiquitinated proteins. The protein is 26S proteasome non-ATPase regulatory subunit 13 (psmD13) of Dictyostelium discoideum (Social amoeba).